Here is a 1028-residue protein sequence, read N- to C-terminus: Contactin-6 (1028 aa).

An N-terminal signal peptide occupies residues 1 to 19; sequence MRLLWKLVILLPLINSCAG. 6 consecutive Ig-like C2-type domains span residues 32-117, 122-208, 227-308, 318-402, 408-502, and 500-587; these read PQDV…AKLQ, EDFE…RSVQ, PKIE…RNLA, PEWE…AELR, PDFS…RTII, and TIIT…ERLS. Intrachain disulfides connect Cys-50/Cys-100, Cys-144/Cys-196, Cys-249/Cys-297, Cys-339/Cys-386, Cys-431/Cys-479, and Cys-521/Cys-577. Residues Asn-65 and Asn-193 are each glycosylated (N-linked (GlcNAc...) asparagine). Asn-368, Asn-377, and Asn-468 each carry an N-linked (GlcNAc...) asparagine glycan. 4 consecutive Fibronectin type-III domains span residues 600–698, 703–800, 805–901, and 902–996; these read PPED…TKAS, APGN…SGED, APRG…TKKS, and PPSQ…KMSS. Residues Asn-659, Asn-765, Asn-860, and Asn-865 are each glycosylated (N-linked (GlcNAc...) asparagine). Tyr-882 carries the phosphotyrosine modification. 4 N-linked (GlcNAc...) asparagine glycosylation sites follow: Asn-895, Asn-931, Asn-956, and Asn-957. Ser-999 carries GPI-anchor amidated serine lipidation. Residues 1000–1028 constitute a propeptide, removed in mature form; sequence TGVQISKPSTQSLSMVGVFYCFAIHPLSR.

Belongs to the immunoglobulin superfamily. Contactin family. Interacts with PTPRG. In terms of tissue distribution, expressed in brain. In brain, it is preferentially expressed in the accessory olfactory bulb, layers II/III and V of the cerebral cortex, piriform cortex, anterior thalamic nuclei, locus coeruleus of the pons and mesencephalic trigeminal nucleus and in Purkinje cells of the cerebellum.

The protein resides in the cell membrane. Contactins mediate cell surface interactions during nervous system development. Participates in oligodendrocytes generation by acting as a ligand of NOTCH1. Its association with NOTCH1 promotes NOTCH1 activation through the released notch intracellular domain (NICD) and subsequent translocation to the nucleus. Involved in motor coordination. This is Contactin-6 (Cntn6) from Mus musculus (Mouse).